Consider the following 602-residue polypeptide: Elongation factor 4 (602 aa).

The tr-type G domain occupies 8-190 (DLIRNFSIVA…AIVHRLPPPK (183 aa)). GTP-binding positions include 20-25 (DHGKST) and 137-140 (NKID).

Belongs to the TRAFAC class translation factor GTPase superfamily. Classic translation factor GTPase family. LepA subfamily.

Its subcellular location is the cell inner membrane. It carries out the reaction GTP + H2O = GDP + phosphate + H(+). Its function is as follows. Required for accurate and efficient protein synthesis under certain stress conditions. May act as a fidelity factor of the translation reaction, by catalyzing a one-codon backward translocation of tRNAs on improperly translocated ribosomes. Back-translocation proceeds from a post-translocation (POST) complex to a pre-translocation (PRE) complex, thus giving elongation factor G a second chance to translocate the tRNAs correctly. Binds to ribosomes in a GTP-dependent manner. The chain is Elongation factor 4 from Cereibacter sphaeroides (strain ATCC 17029 / ATH 2.4.9) (Rhodobacter sphaeroides).